Reading from the N-terminus, the 522-residue chain is Ankyrin repeat and death domain-containing protein 1A (522 aa).

11 ANK repeats span residues 14–43 (PLERQLHEAARQNNVGRMQELIGRRVNTRA), 47–76 (VGRVALHWAAGAGHEQAVRLLLEHEAAVDE), 90–119 (FGMNALLLSAWFGHLRILQILVNSGAKIHC), 123–152 (DGLTLLHCAAQKGHVPVLAFIMEDLEDVAL), 158–187 (LGRTAFHRAAEHGQLDALDFLVGSGCDHNV), 191–220 (EGNTALHLAAGRGHMAVLQRLVDIGLDLEE), 224–253 (EGLTALHSAAGGSHPDCVQLLLRAGSTVNA), 257–286 (KNLSCLHYAALSGSEDVSRVLIHAGGCANV), 290–319 (QGASPLHLAVRHNFPALVRLLINSDSDVNA), 323–352 (RQQTPLHLAAEHAWQDIADMLLIAGVDLNL), and 356–385 (QGKTALAVAVRSNHVSLVDMIIKADRFYRW). The Death domain occupies 413 to 501 (SVLWRLASRY…DLAGWSTMAR (89 aa)).

The sequence is that of Ankyrin repeat and death domain-containing protein 1A (ANKDD1A) from Homo sapiens (Human).